Consider the following 312-residue polypeptide: Homoserine kinase (312 aa).

ATP is bound at residue 94 to 104 (PLGRGLGSSAA).

The protein belongs to the GHMP kinase family. Homoserine kinase subfamily.

The protein localises to the cytoplasm. The enzyme catalyses L-homoserine + ATP = O-phospho-L-homoserine + ADP + H(+). The protein operates within amino-acid biosynthesis; L-threonine biosynthesis; L-threonine from L-aspartate: step 4/5. Catalyzes the ATP-dependent phosphorylation of L-homoserine to L-homoserine phosphate. In Caldanaerobacter subterraneus subsp. tengcongensis (strain DSM 15242 / JCM 11007 / NBRC 100824 / MB4) (Thermoanaerobacter tengcongensis), this protein is Homoserine kinase.